The chain runs to 307 residues: MPLRKTKKKKVLPKSPRAPKLQPSELVIITGLSGSGKASVLKAFEDLGYYCVDNLPVDLVPQFADLVADSPEINRAALVLDIREGQGLDRLPATLRSVRQIVKSNVVFLEADDEILLRRFSETRRPHPLGISMPVKASIESERRRLAPIRKVADMMIDTSKFNVHELRALIFDRFGHARTQDHKKILVSCVSFGFRKGVPDDADLLFDVRFLPNPHFVPEFRPFTGRHPKVAKYIRSFPQTQEFINRISELLVYLLPHYISEGKSYLTIAFGCTGGQHRSVMIAEDVKKRLATAGYNVKVVHRDSPK.

An ATP-binding site is contributed by 31-38 (GLSGSGKA). 81–84 (DIRE) contacts GTP.

It belongs to the RapZ-like family.

Displays ATPase and GTPase activities. The polypeptide is Nucleotide-binding protein Acid345_3782 (Koribacter versatilis (strain Ellin345)).